A 1215-amino-acid polypeptide reads, in one-letter code: DNA-directed RNA polymerase subunit beta' (1215 aa).

Positions 60, 62, 75, and 78 each coordinate Zn(2+). 3 residues coordinate Mg(2+): D450, D452, and D454. Positions 819, 893, 900, and 903 each coordinate Zn(2+).

Belongs to the RNA polymerase beta' chain family. In terms of assembly, the RNAP catalytic core consists of 2 alpha, 1 beta, 1 beta' and 1 omega subunit. When a sigma factor is associated with the core the holoenzyme is formed, which can initiate transcription. The cofactor is Mg(2+). Requires Zn(2+) as cofactor.

The enzyme catalyses RNA(n) + a ribonucleoside 5'-triphosphate = RNA(n+1) + diphosphate. Its function is as follows. DNA-dependent RNA polymerase catalyzes the transcription of DNA into RNA using the four ribonucleoside triphosphates as substrates. This chain is DNA-directed RNA polymerase subunit beta', found in Levilactobacillus brevis (strain ATCC 367 / BCRC 12310 / CIP 105137 / JCM 1170 / LMG 11437 / NCIMB 947 / NCTC 947) (Lactobacillus brevis).